The primary structure comprises 401 residues: MIRPDLNERILSLRKLRLAQCRTRTRRTIERRNGVRLEINGSWLVEFCSNDYLGLAQHFEIIAALQDAAARDGIGATASHLICGHHAIHKALEYELAEWLGYPRALLFGNGFTANLAVQQALLTKENDICVQDRLNHASLIDATRLAGCRLRRYPHLDVDGAAHQLKNAPEGAAMLATDGIFSMDGDIAPLRALSLVARTQQALMYVDDAHGIGVTGPQGSGCVAAAWLSVEEVPLQLVTLSKALGGYGAALLGSATLIQHLAETARPYIYTTALPPAQAAAALTAIRIARRDEWRRQRLQELVERFRENSRRHGLEIMDSETPIQPLQCGDETTTMAMSAALEREGFLVNAIRPPTVPEGKSRLRVTLSALHTTEQIDTLVQALARSRDALATEAAPVQV.

Arg24 lines the substrate pocket. Position 111 to 112 (111 to 112) interacts with pyridoxal 5'-phosphate; the sequence is GF. His137 is a substrate binding site. Ser183, His211, and Thr240 together coordinate pyridoxal 5'-phosphate. At Lys243 the chain carries N6-(pyridoxal phosphate)lysine. Residue Thr357 coordinates substrate.

This sequence belongs to the class-II pyridoxal-phosphate-dependent aminotransferase family. BioF subfamily. As to quaternary structure, homodimer. It depends on pyridoxal 5'-phosphate as a cofactor.

It catalyses the reaction 6-carboxyhexanoyl-[ACP] + L-alanine + H(+) = (8S)-8-amino-7-oxononanoate + holo-[ACP] + CO2. It functions in the pathway cofactor biosynthesis; biotin biosynthesis. In terms of biological role, catalyzes the decarboxylative condensation of pimeloyl-[acyl-carrier protein] and L-alanine to produce 8-amino-7-oxononanoate (AON), [acyl-carrier protein], and carbon dioxide. The chain is 8-amino-7-oxononanoate synthase from Xylella fastidiosa (strain 9a5c).